We begin with the raw amino-acid sequence, 136 residues long: Type II nicking enzyme V.XorIIP (136 aa).

This sequence belongs to the Vsr family.

In terms of biological role, may nick XorII sequences that contain T/G mispairs resulting from m5C-deamination. If unrepaired, these mismatches can lead to C-to-T transition mutations. The very short patch (VSP) repair process counteracts the mutagenic process by repairing the mismatches in favor of the G-containing strand. This enzyme is an endonuclease that nicks double-stranded DNA within the sequence CGATCG (C-methylation site unknown) next to the thymidine residue that is mismatched to 2'-deoxyguanosine. The incision is mismatch-dependent and strand-specific. The sequence is that of Type II nicking enzyme V.XorIIP from Xanthomonas oryzae pv. oryzae (strain KACC10331 / KXO85).